The sequence spans 166 residues: Large ribosomal subunit protein mL49 (166 aa).

The interval 56–78 (RIPDPPKHEHYPTPSGWQPPRDP) is disordered.

It belongs to the mitochondrion-specific ribosomal protein mL49 family. As to quaternary structure, interacts with OXA1L.

It is found in the mitochondrion. The protein is Large ribosomal subunit protein mL49 (MRPL49) of Macaca fascicularis (Crab-eating macaque).